Reading from the N-terminus, the 283-residue chain is Quinate/shikimate dehydrogenase (NAD(+)) (283 aa).

Residues Ser-17, Thr-69, Lys-73, Asn-94, and Asp-110 each contribute to the shikimate site. L-quinate is bound by residues 17-19 (SRT), Thr-69, Lys-73, Asn-94, and Asp-110. Catalysis depends on Lys-73, which acts as the Proton acceptor. Residues 137–138 (GV), Asp-158, Arg-163, 203–206 (PMGM), Ala-213, Val-228, and Gly-251 contribute to the NAD(+) site. A shikimate-binding site is contributed by Gln-258. Gln-258 provides a ligand contact to L-quinate.

It belongs to the shikimate dehydrogenase family. As to quaternary structure, homodimer.

It catalyses the reaction L-quinate + NAD(+) = 3-dehydroquinate + NADH + H(+). The catalysed reaction is shikimate + NAD(+) = 3-dehydroshikimate + NADH + H(+). It participates in metabolic intermediate biosynthesis; chorismate biosynthesis; chorismate from D-erythrose 4-phosphate and phosphoenolpyruvate: step 4/7. Its pathway is aromatic compound metabolism; 3,4-dihydroxybenzoate biosynthesis; 3-dehydroquinate from D-quinate (NAD(+) route). Involved in the biosynthesis of the chorismate, which leads to the biosynthesis of aromatic amino acids, and plays a key role in the quinate degradation pathway. Catalyzes the NAD(+)-dependent oxidation of both quinate and shikimate to 3-dehydroquinate and 3-dehydroshikimate, respectively. It can only use NAD. This Corynebacterium glutamicum (strain ATCC 13032 / DSM 20300 / JCM 1318 / BCRC 11384 / CCUG 27702 / LMG 3730 / NBRC 12168 / NCIMB 10025 / NRRL B-2784 / 534) protein is Quinate/shikimate dehydrogenase (NAD(+)).